A 241-amino-acid polypeptide reads, in one-letter code: ATP synthase subunit a (241 aa).

The next 5 membrane-spanning stretches (helical) occupy residues 30-50 (GQVF…VVVG), 91-111 (FIGT…LVPW), 128-148 (INTT…AGLS), 193-213 (LVVA…VMFL), and 214-234 (GLFT…YYIG).

This sequence belongs to the ATPase A chain family. F-type ATPases have 2 components, CF(1) - the catalytic core - and CF(0) - the membrane proton channel. CF(1) has five subunits: alpha(3), beta(3), gamma(1), delta(1), epsilon(1). CF(0) has four main subunits: a, b, b' and c.

The protein localises to the cellular thylakoid membrane. Key component of the proton channel; it plays a direct role in the translocation of protons across the membrane. In Prochlorococcus marinus (strain MIT 9303), this protein is ATP synthase subunit a.